A 776-amino-acid polypeptide reads, in one-letter code: Reticulon-1 (776 aa).

Disordered stretches follow at residues 1–101, 137–168, 205–245, and 285–580; these read MAAP…KDGE, SESP…DSGI, VKHQ…PAPV, and LTEI…APPP. The residue at position 327 (serine 327) is a Phosphoserine. Residues 328–341 show a composition bias toward low complexity; that stretch reads PGSITPPSSGTEPS. 3 positions are modified to phosphoserine: serine 350, serine 352, and serine 487. Over residues 497 to 511 the composition is skewed to basic and acidic residues; that stretch reads AIREETGVRAEERAP. The Reticulon domain maps to 589 to 776; that stretch reads AIDLLYWRDI…KIPGAKRHAE (188 aa). 2 consecutive transmembrane segments (helical) span residues 603–623 and 705–725; these read IVFG…VVSV and FAVL…LTLL.

Interacts with NDRG1. Interacts with BACE1. As to quaternary structure, interacts with TMEM33. In terms of assembly, interacts with UGCG; regulates the ceramide glucosyltransferase activity of UGCG. Post-translationally, isoforms RTN1-A and RTN1-B are phosphorylated. As to expression, expressed in neural and neuroendocrine tissues and cell cultures derived therefrom. Expression of isoform RTN1-C is strongly correlated with neuronal differentiation.

Its subcellular location is the endoplasmic reticulum membrane. The protein localises to the golgi apparatus membrane. In terms of biological role, inhibits amyloid precursor protein processing, probably by blocking BACE1 activity. The polypeptide is Reticulon-1 (RTN1) (Homo sapiens (Human)).